The following is a 95-amino-acid chain: MSIKPLHDRIVVKPIEADEVSPGGIVIPDSAKEKSTKGEVIAVGTGKPLDNGNVRTPSIKVGDKVIYGQYAGSTYKAEGVEYKVLREDDILAIIG.

Belongs to the GroES chaperonin family. As to quaternary structure, heptamer of 7 subunits arranged in a ring. Interacts with the chaperonin GroEL.

The protein localises to the cytoplasm. Together with the chaperonin GroEL, plays an essential role in assisting protein folding. The GroEL-GroES system forms a nano-cage that allows encapsulation of the non-native substrate proteins and provides a physical environment optimized to promote and accelerate protein folding. GroES binds to the apical surface of the GroEL ring, thereby capping the opening of the GroEL channel. This is Co-chaperonin GroES from Xylella fastidiosa (strain M12).